The sequence spans 99 residues: Malonate decarboxylase acyl carrier protein (99 aa).

Position 25 is an O-(phosphoribosyl dephospho-coenzyme A)serine (serine 25).

Belongs to the MdcC family. Post-translationally, covalently binds the prosthetic group of malonate decarboxylase.

Its subcellular location is the cytoplasm. Its function is as follows. Subunit of malonate decarboxylase, it is an acyl carrier protein to which acetyl and malonyl thioester residues are bound via a 2'-(5''-phosphoribosyl)-3'-dephospho-CoA prosthetic group and turn over during the catalytic mechanism. This Pseudomonas syringae pv. tomato (strain ATCC BAA-871 / DC3000) protein is Malonate decarboxylase acyl carrier protein.